Here is an 802-residue protein sequence, read N- to C-terminus: uncharacterized protein (802 aa).

In terms of domain architecture, EF-hand 1 spans 6–41; it reads SRSEKVKRIFQQFDGNLDGGLSREEMSALVVAVNPR. 7 TPR repeats span residues 229-262, 264-296, 305-338, 339-372, 373-406, 407-440, and 442-474; these read FDGHMAIGKVLYEHQLFKEALVSFKRACELQPTD, RPHFKAGNCLYVLGKYKESKDEFLLALEAAESG, PQIYVNLGISLEGEGMVLSACEYYREAAILCPTH, YRALKLLGSALFGVGEYRAAVKALEEAIYLKPDY, ADAHCDLASSLHAMGEDERAIEVFQRAIDLKPGH, VDALYNLGGLYMDLGRFQRASEMYTRVLAVWPNH, and RAQLNKAVSLLGAGETEEAKRALKEALKMTNRV. The EF-hand 2 domain maps to 595-630; sequence AIKAINEKILSVLDDSGSGRVDLGMFYAVIAPLCGG.

This is an uncharacterized protein from Arabidopsis thaliana (Mouse-ear cress).